A 442-amino-acid polypeptide reads, in one-letter code: Tryptophan synthase beta chain 2 (442 aa).

Residue Lys110 is modified to N6-(pyridoxal phosphate)lysine.

This sequence belongs to the TrpB family. In terms of assembly, tetramer of two alpha and two beta chains. Pyridoxal 5'-phosphate is required as a cofactor.

It carries out the reaction (1S,2R)-1-C-(indol-3-yl)glycerol 3-phosphate + L-serine = D-glyceraldehyde 3-phosphate + L-tryptophan + H2O. It functions in the pathway amino-acid biosynthesis; L-tryptophan biosynthesis; L-tryptophan from chorismate: step 5/5. Its function is as follows. The beta subunit is responsible for the synthesis of L-tryptophan from indole and L-serine. The sequence is that of Tryptophan synthase beta chain 2 from Thermococcus kodakarensis (strain ATCC BAA-918 / JCM 12380 / KOD1) (Pyrococcus kodakaraensis (strain KOD1)).